Consider the following 224-residue polypeptide: Ribosomal RNA large subunit methyltransferase E (224 aa).

Gly64, Trp66, Asp97, Asp113, and Asp138 together coordinate S-adenosyl-L-methionine. Lys178 acts as the Proton acceptor in catalysis.

The protein belongs to the class I-like SAM-binding methyltransferase superfamily. RNA methyltransferase RlmE family.

The protein localises to the cytoplasm. It carries out the reaction uridine(2552) in 23S rRNA + S-adenosyl-L-methionine = 2'-O-methyluridine(2552) in 23S rRNA + S-adenosyl-L-homocysteine + H(+). Its function is as follows. Specifically methylates the uridine in position 2552 of 23S rRNA at the 2'-O position of the ribose in the fully assembled 50S ribosomal subunit. This is Ribosomal RNA large subunit methyltransferase E from Albidiferax ferrireducens (strain ATCC BAA-621 / DSM 15236 / T118) (Rhodoferax ferrireducens).